We begin with the raw amino-acid sequence, 1700 residues long: A-kinase anchor protein SPHKAP (1700 aa).

Disordered stretches follow at residues 364-385 (SNLN…QDGE), 742-778 (IRRR…SNSH), and 793-885 (SKQD…NTQE). Residues 768-778 (SSSSSPLSNSH) show a composition bias toward low complexity. Polar residues predominate over residues 822-831 (DSSTATTSSK). The span at 839-855 (AGEDTKSPHHSENECRA) shows a compositional bias: basic and acidic residues. Residues 857–873 (SEGQRSPTVSQSRSGSQ) are compositionally biased toward polar residues. Positions 929 to 946 (FAEELADTVVSMATEIAA) are PKA-RII subunit binding domain. The tract at residues 980–1006 (KRKKESQGSGTAVRKHKPPRLSEIKRK) is disordered. Phosphoserine is present on residues S1025, S1085, S1107, S1120, S1121, S1124, S1259, and S1288. Disordered stretches follow at residues 1374–1414 (DSVT…PVPI), 1481–1535 (IHSD…DTSS), and 1585–1604 (GQSE…TASP). Positions 1383–1398 (PVSSLSKTASLTNHSP) are enriched in polar residues. Residues 1586–1604 (QSESTEAPASGPPTGTASP) are compositionally biased toward polar residues.

The protein belongs to the AKAP110 family. Interacts (via the PKA-RII subunit binding domain) with the RI subunit of PKA. Interacts with SPHK1; the interaction greatly reduces SPHK1 activity. Highly expressed in heart. Both isoforms abundantly expressed in ventricle. Also expressed in spleen, ovary and brain.

It is found in the cytoplasm. In terms of biological role, anchoring protein that binds preferentially to the type I regulatory subunit of c-AMP-dependent protein kinase (PKA type I) and targets it to distinct subcellular compartments. May act as a converging factor linking cAMP and sphingosine signaling pathways. Plays a regulatory role in the modulation of SPHK1. This Homo sapiens (Human) protein is A-kinase anchor protein SPHKAP (SPHKAP).